A 427-amino-acid polypeptide reads, in one-letter code: Peptidase B (427 aa).

Residues lysine 195 and aspartate 200 each contribute to the Mn(2+) site. The active site involves lysine 207. Residues aspartate 218, aspartate 277, and glutamate 279 each contribute to the Mn(2+) site. The active site involves arginine 281.

This sequence belongs to the peptidase M17 family. In terms of assembly, homohexamer. Mn(2+) is required as a cofactor.

Its subcellular location is the cytoplasm. The enzyme catalyses Release of an N-terminal amino acid, Xaa, from a peptide or arylamide. Xaa is preferably Glu or Asp but may be other amino acids, including Leu, Met, His, Cys and Gln.. In terms of biological role, probably plays an important role in intracellular peptide degradation. The protein is Peptidase B of Salmonella agona (strain SL483).